Here is a 208-residue protein sequence, read N- to C-terminus: ATP-dependent Clp protease proteolytic subunit (208 aa).

Ser105 (nucleophile) is an active-site residue. His130 is an active-site residue.

This sequence belongs to the peptidase S14 family. Fourteen ClpP subunits assemble into 2 heptameric rings which stack back to back to give a disk-like structure with a central cavity, resembling the structure of eukaryotic proteasomes.

Its subcellular location is the cytoplasm. The enzyme catalyses Hydrolysis of proteins to small peptides in the presence of ATP and magnesium. alpha-casein is the usual test substrate. In the absence of ATP, only oligopeptides shorter than five residues are hydrolyzed (such as succinyl-Leu-Tyr-|-NHMec, and Leu-Tyr-Leu-|-Tyr-Trp, in which cleavage of the -Tyr-|-Leu- and -Tyr-|-Trp bonds also occurs).. Its function is as follows. Cleaves peptides in various proteins in a process that requires ATP hydrolysis. Has a chymotrypsin-like activity. Plays a major role in the degradation of misfolded proteins. The sequence is that of ATP-dependent Clp protease proteolytic subunit from Xylella fastidiosa (strain M12).